The chain runs to 25 residues: Caerin-1.3 (25 aa).

A Leucine amide modification is found at L25.

As to expression, expressed by the skin parotoid and/or rostral glands.

The protein localises to the secreted. Its function is as follows. Antibacterial peptide, that adopts an alpha helical conformation which can disrupt bacterial membranes. Each caerin displays a different antimicrobial specificity. This chain is Caerin-1.3, found in Ranoidea caerulea (Green tree frog).